We begin with the raw amino-acid sequence, 1400 residues long: DNA-directed RNA polymerase subunit beta' (1400 aa).

Cys-71, Cys-73, Cys-86, and Cys-89 together coordinate Zn(2+). Mg(2+) contacts are provided by Asp-462, Asp-464, and Asp-466. Positions 811, 885, 892, and 895 each coordinate Zn(2+).

It belongs to the RNA polymerase beta' chain family. In terms of assembly, the RNAP catalytic core consists of 2 alpha, 1 beta, 1 beta' and 1 omega subunit. When a sigma factor is associated with the core the holoenzyme is formed, which can initiate transcription. The cofactor is Mg(2+). Zn(2+) is required as a cofactor.

The catalysed reaction is RNA(n) + a ribonucleoside 5'-triphosphate = RNA(n+1) + diphosphate. DNA-dependent RNA polymerase catalyzes the transcription of DNA into RNA using the four ribonucleoside triphosphates as substrates. This chain is DNA-directed RNA polymerase subunit beta', found in Brucella melitensis biotype 1 (strain ATCC 23456 / CCUG 17765 / NCTC 10094 / 16M).